The following is a 323-amino-acid chain: Ribonuclease Z (323 aa).

Residues His62, His64, Asp66, His67, His144, Asp215, and His273 each coordinate Zn(2+). The active-site Proton acceptor is the Asp66.

Belongs to the RNase Z family. Homodimer. Zn(2+) is required as a cofactor.

It carries out the reaction Endonucleolytic cleavage of RNA, removing extra 3' nucleotides from tRNA precursor, generating 3' termini of tRNAs. A 3'-hydroxy group is left at the tRNA terminus and a 5'-phosphoryl group is left at the trailer molecule.. Functionally, zinc phosphodiesterase, which displays some tRNA 3'-processing endonuclease activity. Probably involved in tRNA maturation, by removing a 3'-trailer from precursor tRNA. This chain is Ribonuclease Z, found in Synechococcus sp. (strain WH7803).